Here is a 136-residue protein sequence, read N- to C-terminus: Outer envelope pore protein 16-4, chloroplastic (136 aa).

The tract at residues 1-59 (MEEELLSAVPCSSLTVESVLRVATAGGLYGLCAGPRDARKIGLSGVSQASFVAKSIGRF) is contains 4 beta strands. 4 consecutive transmembrane segments (helical) span residues 18-34 (SVLR…LCAG), 56-72 (IGRF…VFTM), 86-102 (WVNA…AVAI), and 110-126 (VVGM…LANC).

This sequence belongs to the Tim17/Tim22/Tim23 family. Plastid outer envelope porin OEP16 (TC 1.B.30) subfamily. As to quaternary structure, homodimer and oligomers in membrane.

The protein resides in the plastid. It is found in the chloroplast outer membrane. Its function is as follows. Voltage-dependent high-conductance channel with a slight cation-selectivity; selective for amino acids but excludes triosephosphates or uncharged sugars. Non-essential amino acid-selective channel protein and translocation pore for NADPH:protochlorophyllide oxidoreductase A (PORA) and possibly PORB. In Arabidopsis thaliana (Mouse-ear cress), this protein is Outer envelope pore protein 16-4, chloroplastic (OEP164).